The sequence spans 559 residues: Sulfite reductase [NADPH] hemoprotein beta-component (559 aa).

Residues cysteine 423, cysteine 429, cysteine 468, and cysteine 472 each contribute to the [4Fe-4S] cluster site. Cysteine 472 provides a ligand contact to siroheme.

Belongs to the nitrite and sulfite reductase 4Fe-4S domain family. As to quaternary structure, alpha(8)-beta(8). The alpha component is a flavoprotein, the beta component is a hemoprotein. Requires siroheme as cofactor. [4Fe-4S] cluster serves as cofactor.

It catalyses the reaction hydrogen sulfide + 3 NADP(+) + 3 H2O = sulfite + 3 NADPH + 4 H(+). It functions in the pathway sulfur metabolism; hydrogen sulfide biosynthesis; hydrogen sulfide from sulfite (NADPH route): step 1/1. Its function is as follows. Component of the sulfite reductase complex that catalyzes the 6-electron reduction of sulfite to sulfide. This is one of several activities required for the biosynthesis of L-cysteine from sulfate. The sequence is that of Sulfite reductase [NADPH] hemoprotein beta-component from Thiocapsa roseopersicina.